Here is a 393-residue protein sequence, read N- to C-terminus: Cytochrome b (393 aa).

4 helical membrane passes run 38–58 (FGSLAGICLVIQIVTGVFLAM), 82–104 (WLLRYMHANGASMFFIVVYLHIF), 119–139 (VWCLGVVIFLLMIVTAFIGYV), and 185–205 (FFSLHYLLPFILVGASLLHLA). Residues H88 and H102 each coordinate heme b. Heme b contacts are provided by H189 and H203. An a ubiquinone-binding site is contributed by H208. A run of 4 helical transmembrane segments spans residues 231 to 251 (FYVKDLVGWVAFAIFFSIWIF), 295 to 315 (VGGVAAIALVFICLLALPFFK), 327 to 347 (IYQGIFWLLLADCLLLGWIGC), and 354 to 373 (FVTIGQISSLVFFLFFAITP).

The protein belongs to the cytochrome b family. As to quaternary structure, the main subunits of complex b-c1 are: cytochrome b, cytochrome c1 and the Rieske protein. The cofactor is heme b. In terms of processing, first mitochondrial-encoded protein to be shown to have its N-terminal methionine cleaved off.

The protein resides in the mitochondrion inner membrane. Component of the ubiquinol-cytochrome c reductase complex (complex III or cytochrome b-c1 complex) that is part of the mitochondrial respiratory chain. The b-c1 complex mediates electron transfer from ubiquinol to cytochrome c. Contributes to the generation of a proton gradient across the mitochondrial membrane that is then used for ATP synthesis. In Solanum tuberosum (Potato), this protein is Cytochrome b (MT-CYB).